The following is a 256-amino-acid chain: Protein FixA (256 aa).

This sequence belongs to the ETF beta-subunit/FixA family. As to quaternary structure, heterodimer of FixA and FixB.

It participates in amine and polyamine metabolism; carnitine metabolism. In terms of biological role, required for anaerobic carnitine reduction. May bring reductant to CaiA. This Escherichia coli O7:K1 (strain IAI39 / ExPEC) protein is Protein FixA.